The following is a 524-amino-acid chain: Lycopene epsilon cyclase, chloroplastic (524 aa).

The transit peptide at methionine 1–arginine 45 directs the protein to the chloroplast. Residue leucine 111–proline 139 participates in NAD(+) binding. 2 consecutive transmembrane segments (helical) span residues phenylalanine 441–phenylalanine 461 and phenylalanine 475–isoleucine 495.

Belongs to the lycopene cyclase family.

The protein resides in the plastid. It localises to the chloroplast membrane. The enzyme catalyses a carotenoid psi-end group = a carotenoid epsilon-end group. It participates in carotenoid biosynthesis; alpha-zeacarotene biosynthesis. It functions in the pathway carotenoid biosynthesis; delta-carotene biosynthesis. In terms of biological role, involved in carotenoid biosynthesis. Catalyzes the single epsilon-cyclization reaction which converts lycopene to delta-carotene and neurosporene to alpha-zeacarotene. Required for lutein biosynthesis. This is Lycopene epsilon cyclase, chloroplastic from Arabidopsis thaliana (Mouse-ear cress).